The chain runs to 468 residues: Sulfate adenylyltransferase subunit 1 (468 aa).

The tr-type G domain occupies 22-239 (KELLRFLTCG…TVEIASDKNA (218 aa)). The tract at residues 31 to 38 (GSVDDGKS) is G1. 31–38 (GSVDDGKS) lines the GTP pocket. The G2 stretch occupies residues 89–93 (GITID). The segment at 110–113 (DTPG) is G3. Residues 110–114 (DTPGH) and 165–168 (NKMD) contribute to the GTP site. The tract at residues 165 to 168 (NKMD) is G4. Positions 202 to 204 (SAL) are G5.

It belongs to the TRAFAC class translation factor GTPase superfamily. Classic translation factor GTPase family. CysN/NodQ subfamily. Heterodimer composed of CysD, the smaller subunit, and CysN.

It catalyses the reaction sulfate + ATP + H(+) = adenosine 5'-phosphosulfate + diphosphate. It functions in the pathway sulfur metabolism; hydrogen sulfide biosynthesis; sulfite from sulfate: step 1/3. Functionally, with CysD forms the ATP sulfurylase (ATPS) that catalyzes the adenylation of sulfate producing adenosine 5'-phosphosulfate (APS) and diphosphate, the first enzymatic step in sulfur assimilation pathway. APS synthesis involves the formation of a high-energy phosphoric-sulfuric acid anhydride bond driven by GTP hydrolysis by CysN coupled to ATP hydrolysis by CysD. This is Sulfate adenylyltransferase subunit 1 from Teredinibacter turnerae (strain ATCC 39867 / T7901).